Consider the following 818-residue polypeptide: Probable beta-glucosidase I (818 aa).

N-linked (GlcNAc...) asparagine glycosylation is present at Asn176. Asp204 is a catalytic residue. Residues 374–534 form the PA14 domain; the sequence is DGKPGFTFRV…SQEELISNAV (161 aa). 2 N-linked (GlcNAc...) asparagine glycosylation sites follow: Asn453 and Asn472.

It belongs to the glycosyl hydrolase 3 family.

The protein resides in the secreted. The enzyme catalyses Hydrolysis of terminal, non-reducing beta-D-glucosyl residues with release of beta-D-glucose.. Its pathway is glycan metabolism; cellulose degradation. Functionally, beta-glucosidases are one of a number of cellulolytic enzymes involved in the degradation of cellulosic biomass. Catalyzes the last step releasing glucose from the inhibitory cellobiose. This Aspergillus niger (strain ATCC MYA-4892 / CBS 513.88 / FGSC A1513) protein is Probable beta-glucosidase I (bglI).